A 411-amino-acid chain; its full sequence is Arginine deiminase (411 aa).

Cys-401 (amidino-cysteine intermediate) is an active-site residue.

The protein belongs to the arginine deiminase family. In terms of processing, glycosylated.

Its subcellular location is the cytoplasm. It catalyses the reaction L-arginine + H2O = L-citrulline + NH4(+). It functions in the pathway amino-acid degradation; L-arginine degradation via ADI pathway; carbamoyl phosphate from L-arginine: step 1/2. The polypeptide is Arginine deiminase (Streptococcus pyogenes serotype M3 (strain ATCC BAA-595 / MGAS315)).